Reading from the N-terminus, the 1272-residue chain is AF4/FMR2 family member 2 (1272 aa).

Disordered regions lie at residues 93–183, 201–225, and 283–302; these read IPKN…LTQD, QIGE…GEDA, and AYVR…PTLK. Residues 97-107 show a composition bias toward polar residues; sequence SVPQNPNNKNE. Basic and acidic residues predominate over residues 151 to 160; sequence SKPEWSRDSH. Residues 161-183 show a composition bias toward polar residues; that stretch reads NPSTVLASQASGQPNKMQTLTQD. Ser-391 bears the Phosphoserine mark. Disordered stretches follow at residues 418 to 491, 535 to 687, 779 to 829, and 842 to 903; these read KAKP…KWQL, TNAS…DQEE, SLHA…PEKK, and PPCI…QDKN. Positions 426–438 are enriched in pro residues; the sequence is VNPPLATPQPPPA. Residues 439 to 452 show a composition bias toward low complexity; it reads VQASGGSGSSSESE. Thr-478 carries the post-translational modification Phosphothreonine. Positions 543-558 are enriched in basic and acidic residues; that stretch reads EPKERPLLSLIREKAR. A compositionally biased stretch (polar residues) spans 576–586; that stretch reads STTSETVSQRT. The segment covering 616-629 has biased composition (basic and acidic residues); the sequence is PKEKESVELHDPPR. Basic residues predominate over residues 630–640; sequence GRNKATAHKPA. A compositionally biased stretch (basic and acidic residues) spans 818 to 829; the sequence is PTEVAEKIPEKK. Pro residues-rich tracts occupy residues 844–853 and 874–883; these read CISPAPPHKP and FPPPLSPLPE.

This sequence belongs to the AF4 family.

The protein localises to the nucleus speckle. Its function is as follows. RNA-binding protein. Might be involved in alternative splicing regulation through an interaction with G-quartet RNA structure. The sequence is that of AF4/FMR2 family member 2 (AFF2) from Pan troglodytes (Chimpanzee).